Consider the following 193-residue polypeptide: MNNLEAILRLKTIDAAKKLLGHFLVSKYNNKILIGKIVETEAYLYNDPACHSYSNRTKRNSMMYAQAGTSYVYFTYGMHYCFNVVTADVGIGEAILIRALEPIAGIEQMQLNRSKTKLMDLCSGPAKLTQALNINLKDNGINLLDKDSSILLRYNNDLINEIDIVQTQRIGISKAKDMPYRFYIKDNIFVSKK.

The protein belongs to the DNA glycosylase MPG family.

The protein is Putative 3-methyladenine DNA glycosylase of Francisella tularensis subsp. tularensis (strain FSC 198).